The sequence spans 158 residues: uncharacterized protein (158 aa).

Residues 33–53 traverse the membrane as a helical segment; sequence VLAAVPQLGAAKVLVLLLLGV.

The protein resides in the membrane. This is an uncharacterized protein from Saccharomyces cerevisiae (strain ATCC 204508 / S288c) (Baker's yeast).